Consider the following 706-residue polypeptide: Glycogen [starch] synthase (706 aa).

Arg-26 is a binding site for UDP. The UDP-alpha-D-glucose site is built by His-191 and Arg-197. Residues His-277, Glu-278, Gln-280, His-283, and Lys-287 each coordinate alpha-D-glucose 6-phosphate. Arg-317 provides a ligand contact to UDP. Arg-317 lines the UDP-alpha-D-glucose pocket. Residue His-491 coordinates alpha-D-glucose 6-phosphate. The UDP-alpha-D-glucose site is built by Glu-500, Trp-502, and Gly-503. Residue Thr-505 coordinates UDP. Positions 572 and 576 each coordinate alpha-D-glucose 6-phosphate. The disordered stretch occupies residues 670–706; the sequence is PEEEDPEEYPFPLTLKQRTGPGSPLDSIQGLQLNGTR.

This sequence belongs to the glycosyltransferase 3 family. In terms of assembly, interacts with glucogenin gnn; the interaction is direct.

The catalysed reaction is [(1-&gt;4)-alpha-D-glucosyl](n) + UDP-alpha-D-glucose = [(1-&gt;4)-alpha-D-glucosyl](n+1) + UDP + H(+). It functions in the pathway glycan biosynthesis; glycogen biosynthesis. Its activity is regulated as follows. Allosteric activation by glucose-6-phosphate, and phosphorylation by a cAMP-dependent kinase. Its function is as follows. Glycogen synthase participates in the glycogen biosynthetic process along with glycogenin and glycogen branching enzyme. Extends the primer composed of a few glucose units formed by glycogenin by adding new glucose units to it. In this context, glycogen synthase transfers the glycosyl residue from UDP-Glc to the non-reducing end of alpha-1,4-glucan. The polypeptide is Glycogen [starch] synthase (gsy-1) (Neurospora crassa (strain ATCC 24698 / 74-OR23-1A / CBS 708.71 / DSM 1257 / FGSC 987)).